The chain runs to 468 residues: Aldehyde dehydrogenase family 3 member B1 (468 aa).

Methionine 1 is modified (N-acetylmethionine). 188–193 is an NAD(+) binding site; sequence GNPQVG. Catalysis depends on residues glutamate 210 and cysteine 244. Cysteine 463 is lipidated: S-palmitoyl cysteine. Cysteine 465 is modified (cysteine methyl ester). Cysteine 465 carries the S-geranylgeranyl cysteine lipid modification. Residues 466–468 constitute a propeptide, removed in mature form; that stretch reads TLL.

Belongs to the aldehyde dehydrogenase family. Post-translationally, dually lipidated in the C-terminus; prenylation occurs prior to, and is a prerequisite for palmitoylation. It is also required for activity towards long-chain substrates.

The protein resides in the cell membrane. The enzyme catalyses an aldehyde + NAD(+) + H2O = a carboxylate + NADH + 2 H(+). The catalysed reaction is a long-chain fatty aldehyde + NAD(+) + H2O = a long-chain fatty acid + NADH + 2 H(+). It catalyses the reaction a medium-chain fatty aldehyde + NAD(+) + H2O = a medium-chain fatty acid + NADH + 2 H(+). It carries out the reaction octanal + NAD(+) + H2O = octanoate + NADH + 2 H(+). The enzyme catalyses nonanal + NAD(+) + H2O = nonanoate + NADH + 2 H(+). The catalysed reaction is hexadecanoate + NADH + 2 H(+) = hexadecanal + NAD(+) + H2O. It catalyses the reaction (2E)-octenal + NAD(+) + H2O = (2E)-octenoate + NADH + 2 H(+). It carries out the reaction (E)-non-2-enal + NAD(+) + H2O = (E)-non-2-enoate + NADH + 2 H(+). The enzyme catalyses (E)-4-hydroxynon-2-enal + NAD(+) + H2O = (E)-4-hydroxynon-2-enoate + NADH + 2 H(+). The catalysed reaction is (2E)-hexadecenal + NAD(+) + H2O = (E)-hexadec-2-enoate + NADH + 2 H(+). It catalyses the reaction benzaldehyde + NAD(+) + H2O = benzoate + NADH + 2 H(+). It carries out the reaction an aldehyde + NADP(+) + H2O = a carboxylate + NADPH + 2 H(+). The enzyme catalyses a medium-chain fatty aldehyde + NADP(+) + H2O = a medium-chain fatty acid + NADPH + 2 H(+). The catalysed reaction is hexanal + NADP(+) + H2O = hexanoate + NADPH + 2 H(+). It catalyses the reaction octanal + NADP(+) + H2O = octanoate + NADPH + 2 H(+). It carries out the reaction nonanal + NADP(+) + H2O = nonanoate + NADPH + 2 H(+). The enzyme catalyses (2E)-octenal + NADP(+) + H2O = (2E)-octenoate + NADPH + 2 H(+). The catalysed reaction is (E)-non-2-enal + NADP(+) + H2O = (E)-non-2-enoate + NADPH + 2 H(+). It catalyses the reaction (E)-4-hydroxynon-2-enal + NADP(+) + H2O = (E)-4-hydroxynon-2-enoate + NADPH + 2 H(+). It carries out the reaction benzaldehyde + NADP(+) + H2O = benzoate + NADPH + 2 H(+). It functions in the pathway alcohol metabolism; ethanol degradation; acetate from ethanol: step 2/2. Its function is as follows. Oxidizes medium and long chain saturated and unsaturated fatty aldehydes generated in the plasma membrane into non-toxic fatty acids. May have a protective role against the cytotoxicity induced by lipid peroxidation. Short-chain fatty aldehydes are not good substrates. Can use both NADP(+) and NAD(+) as electron acceptor in vitro, however in vivo preference will depend on their tissue levels. Low activity towards acetaldehyde and 3,4-dihydroxyphenylacetaldehyde. Able to metabolize aromatic aldehydes such as benzaldehyde to their acid form. This is Aldehyde dehydrogenase family 3 member B1 (ALDH3B1) from Bos taurus (Bovine).